A 211-amino-acid polypeptide reads, in one-letter code: 7-carboxy-7-deazaguanine synthase (211 aa).

Substrate contacts are provided by residues 22–24 (LQG) and arginine 37. The Radical SAM core domain occupies 28 to 211 (NTGMPSVFVR…LQTHKLIGIE (184 aa)). [4Fe-4S] cluster contacts are provided by cysteine 41, cysteine 45, and cysteine 48. Threonine 50 serves as a coordination point for Mg(2+). Threonine 78 is a binding site for substrate. Residues glycine 80 and 122-124 (SPK) each bind S-adenosyl-L-methionine.

The protein belongs to the radical SAM superfamily. 7-carboxy-7-deazaguanine synthase family. As to quaternary structure, homodimer. [4Fe-4S] cluster is required as a cofactor. The cofactor is S-adenosyl-L-methionine. It depends on Mg(2+) as a cofactor.

The catalysed reaction is 6-carboxy-5,6,7,8-tetrahydropterin + H(+) = 7-carboxy-7-deazaguanine + NH4(+). Its pathway is purine metabolism; 7-cyano-7-deazaguanine biosynthesis. Catalyzes the complex heterocyclic radical-mediated conversion of 6-carboxy-5,6,7,8-tetrahydropterin (CPH4) to 7-carboxy-7-deazaguanine (CDG), a step common to the biosynthetic pathways of all 7-deazapurine-containing compounds. This chain is 7-carboxy-7-deazaguanine synthase, found in Haemophilus influenzae (strain ATCC 51907 / DSM 11121 / KW20 / Rd).